A 498-amino-acid polypeptide reads, in one-letter code: ADP,ATP carrier protein 1 (498 aa).

Residues Met1–Phe33 lie on the Cytoplasmic side of the membrane. Residues Met34–Val54 form a helical membrane-spanning segment. An intrachain disulfide couples Cys37 to Cys85. The Extracellular portion of the chain corresponds to Thr55–Thr67. Residues Tyr68 to Leu88 traverse the membrane as a helical segment. The Cytoplasmic segment spans residues Lys89–Asn92. Residues Val93–Tyr113 form a helical membrane-spanning segment. At Pro114 to Ser147 the chain is on the extracellular side. Residues Phe148–Trp168 form a helical membrane-spanning segment. At Gln169–Tyr184 the chain is on the cytoplasmic side. A helical membrane pass occupies residues Ser185–Phe205. Residues Leu206–Lys218 lie on the Extracellular side of the membrane. The chain crosses the membrane as a helical span at residues Phe219 to Trp239. Topologically, residues Met240–Tyr279 are cytoplasmic. Residues Val280–Val300 traverse the membrane as a helical segment. Over Trp301–Gly320 the chain is Extracellular. A helical membrane pass occupies residues Gln321–Leu341. Over Arg342–Thr348 the chain is Cytoplasmic. Residues Ala349–Phe369 form a helical membrane-spanning segment. The Extracellular segment spans residues Phe370–Thr379. Residues Gly380 to Leu400 form a helical membrane-spanning segment. Residues Ser401–Arg438 lie on the Cytoplasmic side of the membrane. Position 436 to 442 (Gly436 to Ser442) interacts with ATP. Residues Phe439 to Gly459 form a helical membrane-spanning segment. Topologically, residues Phe460–Pro465 are extracellular. A helical membrane pass occupies residues Tyr466–Asn486. The Cytoplasmic portion of the chain corresponds to Lys487–Lys498.

The protein belongs to the ADP/ATP translocase tlc family.

It localises to the cell membrane. Functionally, provides the rickettsial cell with host ATP in exchange for rickettsial ADP. This is an obligate exchange system. This energy acquiring activity is an important component of rickettsial parasitism. The chain is ADP,ATP carrier protein 1 (tlcA) from Rickettsia bellii (strain RML369-C).